The chain runs to 414 residues: Alanine--glyoxylate aminotransferase (414 aa).

The transit peptide at 1 to 23 (MFRALARASATLGPQVAGWARTM) directs the protein to the mitochondrion. K231 is modified (N6-(pyridoxal phosphate)lysine). Residue K247 is modified to N6-acetyllysine; alternate. The residue at position 247 (K247) is an N6-succinyllysine; alternate. N6-acetyllysine is present on residues K256 and K334. R382 lines the substrate pocket. Positions 412–414 (NKL) match the Microbody targeting signal motif.

The protein belongs to the class-V pyridoxal-phosphate-dependent aminotransferase family. Homodimer. It depends on pyridoxal 5'-phosphate as a cofactor.

It localises to the peroxisome. Its subcellular location is the mitochondrion matrix. The enzyme catalyses L-serine + pyruvate = 3-hydroxypyruvate + L-alanine. It catalyses the reaction glyoxylate + L-alanine = glycine + pyruvate. Catalyzes the transamination of glyoxylate to glycine and contributes to the glyoxylate detoxification. Functionally, catalyzes the transamination between L-serine and pyruvate and contributes to gluconeogenesis from the L-serine metabolism. This Felis catus (Cat) protein is Alanine--glyoxylate aminotransferase.